Reading from the N-terminus, the 289-residue chain is UPF0725 protein At1g27860 (289 aa).

Positions 266–289 (DQQRSMTLPSGEQAESSKKRPRLS) are disordered. The span at 268 to 279 (QRSMTLPSGEQA) shows a compositional bias: polar residues.

Belongs to the UPF0725 (EMB2204) family.

This Arabidopsis thaliana (Mouse-ear cress) protein is UPF0725 protein At1g27860.